Reading from the N-terminus, the 395-residue chain is Glutamate N-acetyltransferase (395 aa).

Substrate-binding residues include threonine 146, lysine 169, threonine 180, glutamate 263, asparagine 390, and threonine 395. Threonine 180 functions as the Nucleophile in the catalytic mechanism.

Belongs to the ArgJ family. As to quaternary structure, heterotetramer of two alpha and two beta chains.

It is found in the cytoplasm. It carries out the reaction N(2)-acetyl-L-ornithine + L-glutamate = N-acetyl-L-glutamate + L-ornithine. It participates in amino-acid biosynthesis; L-arginine biosynthesis; L-ornithine and N-acetyl-L-glutamate from L-glutamate and N(2)-acetyl-L-ornithine (cyclic): step 1/1. Its function is as follows. Catalyzes the transfer of the acetyl group from N(2)-acetylornithine to glutamate, forming N-acetylglutamate and L-ornithine. This chain is Glutamate N-acetyltransferase, found in Methanosarcina mazei (strain ATCC BAA-159 / DSM 3647 / Goe1 / Go1 / JCM 11833 / OCM 88) (Methanosarcina frisia).